Here is a 234-residue protein sequence, read N- to C-terminus: Small ribosomal subunit protein uS3 (234 aa).

Residues 39 to 109 (IRTLINKHYG…EVRIAIYEVK (71 aa)) form the KH type-2 domain.

This sequence belongs to the universal ribosomal protein uS3 family. Part of the 30S ribosomal subunit. Forms a tight complex with proteins S10 and S14.

Its function is as follows. Binds the lower part of the 30S subunit head. Binds mRNA in the 70S ribosome, positioning it for translation. The sequence is that of Small ribosomal subunit protein uS3 from Coprothermobacter proteolyticus (strain ATCC 35245 / DSM 5265 / OCM 4 / BT).